The chain runs to 352 residues: Elongation factor Tu, mitochondrial (352 aa).

Positions 45 to 241 constitute a tr-type G domain; sequence RPHVNVGTIG…AIDTHIPLPH (197 aa). The segment at 54 to 61 is G1; it reads GHVDHGKT. GTP is bound by residues Asp-57, Gly-59, Lys-60, Thr-61, and Thr-62. Thr-61 lines the Mg(2+) pocket. Residues 95–99 form a G2 region; that stretch reads GITIN. Residues 116–119 are G3; the sequence is DCPG. Residues Asn-171, Asp-174, Ser-209, Ala-210, and Leu-211 each contribute to the GTP site. Positions 171–174 are G4; that stretch reads NKAD. The interval 209-211 is G5; the sequence is SAL.

It localises to the mitochondrion. It catalyses the reaction GTP + H2O = GDP + phosphate + H(+). GTP hydrolase that promotes the GTP-dependent binding of aminoacyl-tRNA to the A-site of ribosomes during protein biosynthesis. This Gallus gallus (Chicken) protein is Elongation factor Tu, mitochondrial.